Here is a 319-residue protein sequence, read N- to C-terminus: MNFQELIMTLQRFWAEQNCVIQQPYDLEKGAGTMNPATFLRVLGPEPWRVAYVEPSRRPTDGRYGENPNRLQHYYQYQVILKPSPDNVQDLYLQSLEAMGINPLEHDIRFVEDNWESPTLGAWGLGWEVWLDGMEITQFTYFQQCGGFDCHPVSAEITYGLERLAMYIQQVNSVYDIEWVDGITYGDIHHQTEVDYSHYNFTFADTAMLFNLFNAYEAEAMRVVEQGLVQPAYDYTLKCSHTFNLLDARGAISVTERTAYIGRVRHLARLCAAAYLEQRQKLGYPLLKARQQQPEAPAPGPAAVVGGRDRKDACDVKEG.

Residues Arg-290 to Gly-319 form a disordered region. The segment covering Gly-307–Gly-319 has biased composition (basic and acidic residues).

It belongs to the class-II aminoacyl-tRNA synthetase family. In terms of assembly, tetramer of two alpha and two beta subunits.

It localises to the cytoplasm. The enzyme catalyses tRNA(Gly) + glycine + ATP = glycyl-tRNA(Gly) + AMP + diphosphate. The chain is Glycine--tRNA ligase alpha subunit from Moorella thermoacetica (strain ATCC 39073 / JCM 9320).